The following is a 142-amino-acid chain: Midkine-B (142 aa).

Positions 1–20 (MELRAFCVILLITILAVSSQ) are cleaved as a signal peptide. Intrachain disulfides connect C36–C60, C44–C69, C51–C73, C83–C115, and C93–C125.

Belongs to the pleiotrophin family. In adults, expression is highest in the brain, eye and bone, with lower expression in the heart and lung. Not expressed in the ovary. In the tailbud stage embryo, expressed in the head and tail regions as well as in the central nervous system (CNS).

It is found in the secreted. Functionally, secreted protein that functions as a cytokine and growth factor and mediates its signal through cell-surface proteoglycan and non-proteoglycan receptors. Binds cell-surface proteoglycan receptors via their chondroitin sulfate (CS) groups. Thereby regulates many processes like inflammatory response, cell proliferation, cell adhesion, cell growth, cell survival, tissue regeneration, cell differentiation and cell migration. Inhibits mesoderm formation and promotes neural formation during development. Plays a role in development of the neuromuscular junction (NMJ). Has antibacterial activity against both Gram-positive and Gram-negative bacteria. This Xenopus laevis (African clawed frog) protein is Midkine-B (mdk-b).